A 647-amino-acid polypeptide reads, in one-letter code: Threonine--tRNA ligase (647 aa).

A TGS domain is found at 1 to 61 (MIKITFPDGA…EEDGSIEIVT (61 aa)). Residues 240–538 (DHRKLGKELD…LIETYKGAFP (299 aa)) are catalytic. Positions 334, 385, and 515 each coordinate Zn(2+).

The protein belongs to the class-II aminoacyl-tRNA synthetase family. Homodimer. It depends on Zn(2+) as a cofactor.

It is found in the cytoplasm. It carries out the reaction tRNA(Thr) + L-threonine + ATP = L-threonyl-tRNA(Thr) + AMP + diphosphate + H(+). Its function is as follows. Catalyzes the attachment of threonine to tRNA(Thr) in a two-step reaction: L-threonine is first activated by ATP to form Thr-AMP and then transferred to the acceptor end of tRNA(Thr). Also edits incorrectly charged L-seryl-tRNA(Thr). This is Threonine--tRNA ligase from Streptococcus pyogenes serotype M18 (strain MGAS8232).